Reading from the N-terminus, the 121-residue chain is Putative iron-sulfur cluster insertion protein ErpA (121 aa).

Residues cysteine 49, cysteine 113, and cysteine 115 each coordinate iron-sulfur cluster.

Belongs to the HesB/IscA family. As to quaternary structure, homodimer. Requires iron-sulfur cluster as cofactor.

Its function is as follows. Required for insertion of 4Fe-4S clusters. The protein is Putative iron-sulfur cluster insertion protein ErpA of Paraburkholderia phymatum (strain DSM 17167 / CIP 108236 / LMG 21445 / STM815) (Burkholderia phymatum).